Reading from the N-terminus, the 625-residue chain is Glucose dehydrogenase [FAD, quinone] (625 aa).

The signal sequence occupies residues methionine 1–serine 42. Aspartate 66–glutamate 95 contributes to the FAD binding site. Catalysis depends on histidine 544, which acts as the Proton acceptor. Residue selenocysteine 613 is a non-standard amino acid, selenocysteine.

It belongs to the GMC oxidoreductase family. The cofactor is FAD.

It localises to the secreted. The catalysed reaction is a quinone + D-glucose = D-glucono-1,5-lactone + a quinol. In terms of biological role, essential for cuticular modification during development. The polypeptide is Glucose dehydrogenase [FAD, quinone] (Gld) (Drosophila melanogaster (Fruit fly)).